Reading from the N-terminus, the 37-residue chain is Cytochrome b6-f complex subunit 7 (37 aa).

Residues 11-29 (AVLLMVLVLVGLAWGFLLL) traverse the membrane as a helical segment.

The protein belongs to the PetM family. The 4 large subunits of the cytochrome b6-f complex are cytochrome b6, subunit IV (17 kDa polypeptide, PetD), cytochrome f and the Rieske protein, while the 4 small subunits are PetG, PetL, PetM and PetN. The complex functions as a dimer.

The protein resides in the cellular thylakoid membrane. In terms of biological role, component of the cytochrome b6-f complex, which mediates electron transfer between photosystem II (PSII) and photosystem I (PSI), cyclic electron flow around PSI, and state transitions. This is Cytochrome b6-f complex subunit 7 from Rippkaea orientalis (strain PCC 8801 / RF-1) (Cyanothece sp. (strain PCC 8801)).